A 405-amino-acid polypeptide reads, in one-letter code: Imidazolonepropionase (405 aa).

Positions 73 and 75 each coordinate Fe(3+). The Zn(2+) site is built by His73 and His75. The 4-imidazolone-5-propanoate site is built by Arg82, Tyr145, and His178. Tyr145 lines the N-formimidoyl-L-glutamate pocket. His243 is a Fe(3+) binding site. Residue His243 coordinates Zn(2+). Gln246 is a 4-imidazolone-5-propanoate binding site. Position 318 (Asp318) interacts with Fe(3+). Position 318 (Asp318) interacts with Zn(2+). Residues Asn320 and Gly322 each contribute to the N-formimidoyl-L-glutamate site. Thr323 is a 4-imidazolone-5-propanoate binding site.

It belongs to the metallo-dependent hydrolases superfamily. HutI family. It depends on Zn(2+) as a cofactor. Fe(3+) serves as cofactor.

It localises to the cytoplasm. The catalysed reaction is 4-imidazolone-5-propanoate + H2O = N-formimidoyl-L-glutamate. It functions in the pathway amino-acid degradation; L-histidine degradation into L-glutamate; N-formimidoyl-L-glutamate from L-histidine: step 3/3. Catalyzes the hydrolytic cleavage of the carbon-nitrogen bond in imidazolone-5-propanoate to yield N-formimidoyl-L-glutamate. It is the third step in the universal histidine degradation pathway. The chain is Imidazolonepropionase from Brucella suis biovar 1 (strain 1330).